The following is a 314-amino-acid chain: Methionyl-tRNA formyltransferase (314 aa).

113–116 is a (6S)-5,6,7,8-tetrahydrofolate binding site; that stretch reads SLLP.

This sequence belongs to the Fmt family.

The catalysed reaction is L-methionyl-tRNA(fMet) + (6R)-10-formyltetrahydrofolate = N-formyl-L-methionyl-tRNA(fMet) + (6S)-5,6,7,8-tetrahydrofolate + H(+). Functionally, attaches a formyl group to the free amino group of methionyl-tRNA(fMet). The formyl group appears to play a dual role in the initiator identity of N-formylmethionyl-tRNA by promoting its recognition by IF2 and preventing the misappropriation of this tRNA by the elongation apparatus. The polypeptide is Methionyl-tRNA formyltransferase (Ectopseudomonas mendocina (strain ymp) (Pseudomonas mendocina)).